The following is a 136-amino-acid chain: ATP synthase epsilon chain (136 aa).

Belongs to the ATPase epsilon chain family. As to quaternary structure, F-type ATPases have 2 components, CF(1) - the catalytic core - and CF(0) - the membrane proton channel. CF(1) has five subunits: alpha(3), beta(3), gamma(1), delta(1), epsilon(1). CF(0) has three main subunits: a, b and c.

The protein resides in the cell inner membrane. Its function is as follows. Produces ATP from ADP in the presence of a proton gradient across the membrane. The sequence is that of ATP synthase epsilon chain from Afipia carboxidovorans (strain ATCC 49405 / DSM 1227 / KCTC 32145 / OM5) (Oligotropha carboxidovorans).